Consider the following 794-residue polypeptide: LPS-assembly protein LptD (794 aa).

Residues 1–31 form the signal peptide; sequence MPSHCSSLLCARFRLSSLAVIVALAASGVRA.

Belongs to the LptD family. Component of the lipopolysaccharide transport and assembly complex. Interacts with LptE and LptA.

It is found in the cell outer membrane. In terms of biological role, together with LptE, is involved in the assembly of lipopolysaccharide (LPS) at the surface of the outer membrane. This is LPS-assembly protein LptD from Marinobacter nauticus (strain ATCC 700491 / DSM 11845 / VT8) (Marinobacter aquaeolei).